A 166-amino-acid chain; its full sequence is NAD(P)H-quinone oxidoreductase subunit I, chloroplastic (166 aa).

4Fe-4S ferredoxin-type domains lie at 55–84 and 95–124; these read GRIH…VDWK and LNYS…MTEE. Residues C64, C67, C70, C74, C104, C107, C110, and C114 each coordinate [4Fe-4S] cluster.

It belongs to the complex I 23 kDa subunit family. As to quaternary structure, NDH is composed of at least 16 different subunits, 5 of which are encoded in the nucleus. [4Fe-4S] cluster is required as a cofactor.

Its subcellular location is the plastid. The protein localises to the chloroplast thylakoid membrane. It catalyses the reaction a plastoquinone + NADH + (n+1) H(+)(in) = a plastoquinol + NAD(+) + n H(+)(out). The catalysed reaction is a plastoquinone + NADPH + (n+1) H(+)(in) = a plastoquinol + NADP(+) + n H(+)(out). In terms of biological role, NDH shuttles electrons from NAD(P)H:plastoquinone, via FMN and iron-sulfur (Fe-S) centers, to quinones in the photosynthetic chain and possibly in a chloroplast respiratory chain. The immediate electron acceptor for the enzyme in this species is believed to be plastoquinone. Couples the redox reaction to proton translocation, and thus conserves the redox energy in a proton gradient. The polypeptide is NAD(P)H-quinone oxidoreductase subunit I, chloroplastic (Marshallia caespitosa (Barbara's buttons)).